Consider the following 133-residue polypeptide: Small ribosomal subunit protein uS8 (133 aa).

The protein belongs to the universal ribosomal protein uS8 family. Part of the 30S ribosomal subunit. Contacts proteins S5 and S12.

In terms of biological role, one of the primary rRNA binding proteins, it binds directly to 16S rRNA central domain where it helps coordinate assembly of the platform of the 30S subunit. The protein is Small ribosomal subunit protein uS8 of Orientia tsutsugamushi (strain Boryong) (Rickettsia tsutsugamushi).